The chain runs to 640 residues: Threonine--tRNA ligase (640 aa).

Residues 1–59 enclose the TGS domain; sequence MKIKVKLPDGKEKEYDRGITPAEIAKELGIKKAIGAVVNGELWDLKRPIENDCELRLVT. The catalytic stretch occupies residues 240 to 531; that stretch reads DHRKLGPQLE…LIEHFAGAFP (292 aa). Residues cysteine 332, histidine 383, and histidine 508 each contribute to the Zn(2+) site.

The protein belongs to the class-II aminoacyl-tRNA synthetase family. Homodimer. The cofactor is Zn(2+).

It localises to the cytoplasm. The enzyme catalyses tRNA(Thr) + L-threonine + ATP = L-threonyl-tRNA(Thr) + AMP + diphosphate + H(+). Catalyzes the attachment of threonine to tRNA(Thr) in a two-step reaction: L-threonine is first activated by ATP to form Thr-AMP and then transferred to the acceptor end of tRNA(Thr). Also edits incorrectly charged L-seryl-tRNA(Thr). This is Threonine--tRNA ligase from Thermotoga maritima (strain ATCC 43589 / DSM 3109 / JCM 10099 / NBRC 100826 / MSB8).